Here is a 1227-residue protein sequence, read N- to C-terminus: MANGVIPPPGGASPLPQVRVPLEEPPLGPDVEEEDDDLGKTLAVSRFGDLISKTPAWDPEKPSRSYSERDFEFHRHTSHHTHHPLSARLPPPHKLRRPPPTSARHTRRKRKKEKTSAPPSEGTPPIQEEGGAGAEEEEEEEEEEEGESEAEPVEPLPPGPPQKAKFSIGSDEDDSPGLPVKAPCAKALPSVGLQSDQSPQRSGSSPSPRARASRISTEKSRPWSPSASYDLRERLCPGSALGNPGPEQRVPTDEAEAQMLGSADLDDMKSHRLEDNPGVRRHLVKKPSRIQGGRGSPSGLAPILRRKKKKKKLDRRPHEVFVELNELMLDRSQEPHWRETARWIKFEEDVEEETERWGKPHVASLSFRSLLELRRTIAQGAALLDLEQTTLPGIAHLVVETMIVSDQIRPEDRASVLRTLLLKHSHPNDDKDSGFFPRNPSSSSVNSVLGNHHPTPSHGPDGAVPTMADDQGEPAPLWPHDPDAKEKPLHMPGGDGHRGKSLKLLEKIPEDAEATVVLVGCVPFLEQPAAAFVRLSEAVLLESVLEVPVPVRFLFVMLGPSHTSTDYHELGRSIATLMSDKLFHEAAYQADDRQDLLGAISEFLDGSIVIPPSEVEGRDLLRSVAAFQRELLRKRREREQTKVEMTTRGGYAAPGKELSLEMGGSEATSEDDPLQRTGSVFGGLVRDVKRRYPHYPSDLRDALHSQCVAAVLFIYFAALSPAITFGGLLGEKTEGLMGVSELIVSTAVLGVLFSLLGAQPLLVVGFSGPLLVFEEAFFKFCRAQDLEYLTGRVWVGLWLVVFVLALVAAEGSFLVRYISPFTQEIFAFLISLIFIYETFHKLYKVFTEHPLLPFYPPDEALETGLELNSSALPPTEGPPGPRNQPNTALLSLILMLGTFLIAFFLRKFRNSRFLGGKARRIIGDFGIPISILVMVLVDYSITDTYTQKLTVPTGLSVTSPHKRTWFIPPLGSARPFPPWMMVAAAVPALLVLILIFMETQITALIVSQKARRLLKGSGFHLDLLLIGSLGGLCGLFGLPWLTAATVRSVTHVNALTVMRTAIAPGDKPQIQEVREQRVTGVLIASLVGLSIVMGAVLRRIPLAVLFGIFLYMGVTSLSGIQLSQRLLLIFMPAKHHPEQPYVTKVKTWRMHLFTCIQLGCIALLWVVKSTAASLAFPFLLLLTVPLRRCLLPRLFQDRELQALDSEDAEPNFDEDGQDEYNELHMPV.

Pro residues predominate over residues 1 to 11 (MANGVIPPPGG). Disordered stretches follow at residues 1–256 (MANG…DEAE), 286–312 (KPSRIQGGRGSPSGLAPILRRKKKKKK), and 428–497 (NDDK…GDGH). Over 1-707 (MANGVIPPPG…DLRDALHSQC (707 aa)) the chain is Cytoplasmic. Residues 58–75 (DPEKPSRSYSERDFEFHR) are compositionally biased toward basic and acidic residues. Basic residues-rich tracts occupy residues 76-97 (HTSHHTHHPLSARLPPPHKLRR) and 104-113 (RHTRRKRKKE). Positions 134-152 (AEEEEEEEEEEEGESEAEP) are enriched in acidic residues. A phosphoserine mark is found at serine 167, serine 170, serine 175, and serine 198. Positions 194 to 215 (QSDQSPQRSGSSPSPRARASRI) are enriched in low complexity. Arginine 294 carries the post-translational modification Omega-N-methylarginine. Over residues 435-448 (FFPRNPSSSSVNSV) the composition is skewed to low complexity. Residues 480 to 497 (HDPDAKEKPLHMPGGDGH) are compositionally biased toward basic and acidic residues. 4 helical membrane passes run 708 to 730 (VAAVLFIYFAALSPAITFGGLLG), 736 to 773 (LMGVSELIVSTAVLGVLFSLLGAQPLLVVGFSGPLLVF), 793 to 815 (VWVGLWLVVFVLALVAAEGSFLV), and 825 to 846 (IFAFLISLIFIYETFHKLYKVF). The interval 708 to 1227 (VAAVLFIYFA…DEYNELHMPV (520 aa)) is membrane (anion exchange). Asparagine 868 carries N-linked (GlcNAc...) asparagine glycosylation. Residues 888 to 905 (ALLSLILMLGTFLIAFFL) form a helical membrane-spanning segment. Residues 906–920 (RKFRNSRFLGGKARR) lie on the Cytoplasmic side of the membrane. The next 5 helical transmembrane spans lie at 921-941 (IIGDFGIPISILVMVLVDYSI), 975-997 (PFPPWMMVAAAVPALLVLILIFM), 1023-1044 (LLLIGSLGGLCGLFGLPWLTAA), 1078-1123 (VTGV…IQLS), and 1150-1186 (MHLFTCIQLGCIALLWVVKSTAASLAFPFLLLLTVPL). Cysteine 1160 is lipidated: S-palmitoyl cysteine.

The protein belongs to the anion exchanger (TC 2.A.31) family. In terms of tissue distribution, expressed in the brain.

Its subcellular location is the cell membrane. It carries out the reaction hydrogencarbonate(in) + chloride(out) = hydrogencarbonate(out) + chloride(in). Inhibited by 4,4'-diisothiocyanatostilbene-2,2'-disulfonic acid (DIDS). Sodium-independent anion exchanger which mediates the electroneutral exchange of chloride for bicarbonate ions across the cell membrane. May be involved in the regulation of intracellular pH, and the modulation of cardiac action potential. The sequence is that of Anion exchange protein 3 (Slc4a3) from Mus musculus (Mouse).